The chain runs to 171 residues: ATP synthase subunit b (171 aa).

Residues 2-22 (FVVKMVLGFLILLSPLCATGL) form a helical membrane-spanning segment.

It belongs to the ATPase B chain family. In terms of assembly, F-type ATPases have 2 components, F(1) - the catalytic core - and F(0) - the membrane proton channel. F(1) has five subunits: alpha(3), beta(3), gamma(1), delta(1), epsilon(1). F(0) has three main subunits: a(1), b(2) and c(10-14). The alpha and beta chains form an alternating ring which encloses part of the gamma chain. F(1) is attached to F(0) by a central stalk formed by the gamma and epsilon chains, while a peripheral stalk is formed by the delta and b chains.

It localises to the cell inner membrane. In terms of biological role, f(1)F(0) ATP synthase produces ATP from ADP in the presence of a proton or sodium gradient. F-type ATPases consist of two structural domains, F(1) containing the extramembraneous catalytic core and F(0) containing the membrane proton channel, linked together by a central stalk and a peripheral stalk. During catalysis, ATP synthesis in the catalytic domain of F(1) is coupled via a rotary mechanism of the central stalk subunits to proton translocation. Functionally, component of the F(0) channel, it forms part of the peripheral stalk, linking F(1) to F(0). This Helicobacter pylori (strain G27) protein is ATP synthase subunit b.